Consider the following 234-residue polypeptide: ATP synthase subunit a 1 (234 aa).

A run of 6 helical transmembrane segments spans residues 29 to 49 (FLVH…VALL), 90 to 110 (LIAT…IPGF), 116 to 136 (NLNT…VVGV), 147 to 167 (FVGP…IGHL), 186 to 206 (IVLV…MMLM), and 207 to 227 (GILV…IYIA).

It belongs to the ATPase A chain family. F-type ATPases have 2 components, CF(1) - the catalytic core - and CF(0) - the membrane proton channel. CF(1) has five subunits: alpha(3), beta(3), gamma(1), delta(1), epsilon(1). CF(0) has three main subunits: a(1), b(2) and c(9-12). The alpha and beta chains form an alternating ring which encloses part of the gamma chain. CF(1) is attached to CF(0) by a central stalk formed by the gamma and epsilon chains, while a peripheral stalk is formed by the delta and b chains.

Its subcellular location is the cell inner membrane. Its function is as follows. Key component of the proton channel; it plays a direct role in the translocation of protons across the membrane. The sequence is that of ATP synthase subunit a 1 from Syntrophotalea carbinolica (strain DSM 2380 / NBRC 103641 / GraBd1) (Pelobacter carbinolicus).